The following is a 299-amino-acid chain: Protein LacX, chromosomal (299 aa).

This is Protein LacX, chromosomal (lacX) from Lactococcus lactis subsp. lactis (Streptococcus lactis).